The following is a 636-amino-acid chain: LDL receptor repeat-containing protein egg-1 (636 aa).

At 1 to 130 (MSSIAQKNRN…NHSNLFQCPS (130 aa)) the chain is on the cytoplasmic side. A helical; Signal-anchor for type II membrane protein membrane pass occupies residues 131–151 (VAIVLVLALVILGVLAAIPLT). The Extracellular segment spans residues 152-636 (LMLTSSAQKM…VLKNSGRFPY (485 aa)). N202 is a glycosylation site (N-linked (GlcNAc...) asparagine). 8 LDL-receptor class A domains span residues 205–243 (TCSGFGFACTGAVHMVIPSSKRCDGFKDCQDGSDEENCK), 244–296 (ECQS…AMCK), 298–335 (TCSKDQFKCNGSNACLPLSAKCDGVKDCSDGSDENNCN), 336–375 (KCQKGAHVSLVSRNIKHLFASHVCDGVAQCADRSDEQQCD), 378–415 (TCSGSDKALCDDGTCIKRSQVCDGKKDCSDGMDEENCP), 457–499 (KCHP…KNCT), 503–541 (ECGIDNASQFTCDRKCVDASRRCDGVWDCEDKSDEQNCS), and 542–579 (QCASGSIKCSADKKCLPAYTRCNGVAECSDGSDELKCS). 22 cysteine pairs are disulfide-bonded: C213/C233, C227/C242, C245/C273, C251/C286, C280/C295, C299/C312, C306/C325, C319/C334, C337/C365, C359/C374, C379/C392, C387/C405, C399/C414, C458/C476, C466/C489, C483/C498, C504/C518, C514/C531, C525/C540, C543/C556, C550/C569, and C563/C578. N508 carries N-linked (GlcNAc...) asparagine glycosylation. An N-linked (GlcNAc...) asparagine glycan is attached at N614.

It localises to the cell membrane. Probable receptor which is required for the oocyte-to-zygote transition although its exact function is controversial. Seems to be required for fertilization probably by promoting the interaction or fusion between sperm and oocyte. Conversely, shown to be dispensable for fertilization but required for the formation of a continuous and cohesive eggshell chitin layer by maintaining a homogenous distribution of chitin synthase chs-1 at the unfertilized oocyte cell membrane. Appears to recruit or maintain together to the unfertilized oocyte cortex several proteins including chs-1, kinase mbk-2 and pseudophosphatases egg-3, and possibly egg-4 and egg-5. The sequence is that of LDL receptor repeat-containing protein egg-1 from Caenorhabditis briggsae.